A 273-amino-acid chain; its full sequence is Shikimate dehydrogenase (NADP(+)) (273 aa).

Shikimate-binding positions include 18 to 20 (SKS) and Thr65. Lys69 acts as the Proton acceptor in catalysis. An NADP(+)-binding site is contributed by Glu81. The shikimate site is built by Asn90 and Asp105. Residues 130 to 134 (GAGGA), 154 to 159 (NRTHSK), and Met217 contribute to the NADP(+) site. Tyr219 serves as a coordination point for shikimate. Residue Gly240 coordinates NADP(+).

Belongs to the shikimate dehydrogenase family. As to quaternary structure, homodimer.

It carries out the reaction shikimate + NADP(+) = 3-dehydroshikimate + NADPH + H(+). Its pathway is metabolic intermediate biosynthesis; chorismate biosynthesis; chorismate from D-erythrose 4-phosphate and phosphoenolpyruvate: step 4/7. In terms of biological role, involved in the biosynthesis of the chorismate, which leads to the biosynthesis of aromatic amino acids. Catalyzes the reversible NADPH linked reduction of 3-dehydroshikimate (DHSA) to yield shikimate (SA). This is Shikimate dehydrogenase (NADP(+)) from Janthinobacterium sp. (strain Marseille) (Minibacterium massiliensis).